A 495-amino-acid chain; its full sequence is Putative aldehyde dehydrogenase AldA (495 aa).

NAD(+) is bound at residue 212–218 (GKGSESG). Catalysis depends on residues Glu256 and Cys290.

Belongs to the aldehyde dehydrogenase family.

It carries out the reaction an aldehyde + NAD(+) + H2O = a carboxylate + NADH + 2 H(+). In Staphylococcus aureus (strain MRSA252), this protein is Putative aldehyde dehydrogenase AldA (aldA).